The primary structure comprises 342 residues: Farnesyl pyrophosphate synthase (342 aa).

Residues K47, R50, and Q86 each contribute to the isopentenyl diphosphate site. 2 residues coordinate Mg(2+): D93 and D97. Dimethylallyl diphosphate is bound at residue R102. R103 provides a ligand contact to isopentenyl diphosphate. The dimethylallyl diphosphate site is built by K190, T191, Q229, K246, and K255.

This sequence belongs to the FPP/GGPP synthase family. As to quaternary structure, homodimer. Requires Mg(2+) as cofactor. In terms of tissue distribution, mostly expressed in roots and seeds, and to a lower extent, in leaves and stems.

It is found in the cytoplasm. It catalyses the reaction isopentenyl diphosphate + dimethylallyl diphosphate = (2E)-geranyl diphosphate + diphosphate. The enzyme catalyses isopentenyl diphosphate + (2E)-geranyl diphosphate = (2E,6E)-farnesyl diphosphate + diphosphate. It participates in isoprenoid biosynthesis; farnesyl diphosphate biosynthesis; farnesyl diphosphate from geranyl diphosphate and isopentenyl diphosphate: step 1/1. It functions in the pathway isoprenoid biosynthesis; geranyl diphosphate biosynthesis; geranyl diphosphate from dimethylallyl diphosphate and isopentenyl diphosphate: step 1/1. Its activity is regulated as follows. Stimulated by methyl jasmonate (MeJA). Catalyzes the sequential condensation of isopentenyl pyrophosphate with the allylic pyrophosphates, dimethylallyl pyrophosphate, and then with the resultant geranylpyrophosphate to the ultimate product farnesyl pyrophosphate. Component of the triterpene saponins (e.g. ginsenosides or panaxosides) and phytosterols biosynthetic pathways. Promotes the accumulation of ginsenosides. The sequence is that of Farnesyl pyrophosphate synthase from Panax ginseng (Korean ginseng).